A 665-amino-acid polypeptide reads, in one-letter code: non-specific serine/threonine protein kinase (665 aa).

Residues Phe-145 to Phe-597 form the Protein kinase domain. Residues Ile-151 to Val-159 and Lys-181 each bind ATP. Catalysis depends on Asp-268, which acts as the Proton acceptor.

This sequence belongs to the protein kinase superfamily. Ser/Thr protein kinase family. As to quaternary structure, interacts with chif (via N-terminus).

It carries out the reaction L-seryl-[protein] + ATP = O-phospho-L-seryl-[protein] + ADP + H(+). The enzyme catalyses L-threonyl-[protein] + ATP = O-phospho-L-threonyl-[protein] + ADP + H(+). Probable serine/threonine protein kinase that forms a complex with the N-terminal peptide of the chiffon protein and may be involved in regulating meiotic processes in the male testis. The protein is non-specific serine/threonine protein kinase of Drosophila melanogaster (Fruit fly).